We begin with the raw amino-acid sequence, 368 residues long: Polymerase delta-interacting protein 2 (368 aa).

The N-terminal 51 residues, 1-51 (MAACTARRALAVGSRWWSRSLTGARWPRPLCAAAGAGAFSPASTTTTRRHL), are a transit peptide targeting the mitochondrion. One can recognise an ApaG domain in the interval 235 to 360 (RETTENIRVT…FSLESNKDEK (126 aa)). At T292 the chain carries Phosphothreonine.

As to quaternary structure, interacts with PCNA and POLD2. Interacts with SSBP1. Interacts with PRIMPOL; leading to enhance DNA polymerase activity of PRIMPOL. Interacts with POLH. Interacts with POLD1; leading to stimulate DNA polymerase activity of POLD1.

The protein localises to the mitochondrion matrix. The protein resides in the nucleus. Involved in DNA damage tolerance by regulating translesion synthesis (TLS) of templates carrying DNA damage lesions such as 8oxoG and abasic sites. May act by stimulating activity of DNA polymerases involved in TLS, such as PRIMPOL and polymerase delta (POLD1). This Homo sapiens (Human) protein is Polymerase delta-interacting protein 2.